Here is a 448-residue protein sequence, read N- to C-terminus: tRNA-2-methylthio-N(6)-dimethylallyladenosine synthase (448 aa).

In terms of domain architecture, MTTase N-terminal spans 2–119 (KKLYIKTFGC…LSDLIAQRRK (118 aa)). [4Fe-4S] cluster contacts are provided by Cys-11, Cys-48, Cys-82, Cys-156, Cys-160, and Cys-163. A Radical SAM core domain is found at 142 to 375 (RQTRGSAYVS…LALIEGQSNQ (234 aa)). The TRAM domain occupies 378–444 (QKMLGKTERV…NYTLRGELVE (67 aa)).

Belongs to the methylthiotransferase family. MiaB subfamily. As to quaternary structure, monomer. [4Fe-4S] cluster is required as a cofactor.

Its subcellular location is the cytoplasm. The enzyme catalyses N(6)-dimethylallyladenosine(37) in tRNA + (sulfur carrier)-SH + AH2 + 2 S-adenosyl-L-methionine = 2-methylsulfanyl-N(6)-dimethylallyladenosine(37) in tRNA + (sulfur carrier)-H + 5'-deoxyadenosine + L-methionine + A + S-adenosyl-L-homocysteine + 2 H(+). Its function is as follows. Catalyzes the methylthiolation of N6-(dimethylallyl)adenosine (i(6)A), leading to the formation of 2-methylthio-N6-(dimethylallyl)adenosine (ms(2)i(6)A) at position 37 in tRNAs that read codons beginning with uridine. The chain is tRNA-2-methylthio-N(6)-dimethylallyladenosine synthase from Polynucleobacter asymbioticus (strain DSM 18221 / CIP 109841 / QLW-P1DMWA-1) (Polynucleobacter necessarius subsp. asymbioticus).